A 298-amino-acid polypeptide reads, in one-letter code: ADP/ATP translocase 1 (298 aa).

The Mitochondrial intermembrane segment spans residues 1–7 (MGDQALS). Gly2 carries the N-acetylglycine modification. Residues 6–98 (LSFLKDFLAG…FAFKDKYKQI (93 aa)) form a Solcar 1 repeat. At Ser7 the chain carries Phosphoserine. A helical transmembrane segment spans residues 8 to 37 (FLKDFLAGGIAAAVSKTAVAPIERVKLLLQ). Over 38–74 (VQHASKQISAEKQYKGIIDCVVRIPKEQGFLSFWRGN) the chain is Mitochondrial matrix. Residue Lys52 is modified to N6,N6,N6-trimethyllysine. Residues 75-99 (LANVIRYFPTQALNFAFKDKYKQIF) traverse the membrane as a helical segment. The ADP site is built by Arg80 and Lys92. Topologically, residues 100 to 109 (LGGVDRHKQF) are mitochondrial intermembrane. Residues 110-130 (WRYFAGNLASGGAAGATSLCF) traverse the membrane as a helical segment. Solcar repeat units lie at residues 111 to 201 (RYFA…AKGM) and 212 to 297 (VSWM…IKKY). Residues 131-178 (VYPLDFARTRLAADVGKGSSQREFNGLGDCLTKIFKSDGLKGLYQGFS) are Mitochondrial matrix-facing. Residue Lys147 is modified to N6-succinyllysine. Residues Ser149 and Ser150 each carry the phosphoserine modification. S-nitrosocysteine is present on Cys160. A helical membrane pass occupies residues 179-199 (VSVQGIIIYRAAYFGVYDTAK). Residues 200 to 210 (GMLPDPKNVHI) lie on the Mitochondrial intermembrane side of the membrane. The chain crosses the membrane as a helical span at residues 211–231 (IVSWMIAQSVTAVAGLVSYPF). The Mitochondrial matrix portion of the chain corresponds to 232-273 (DTVRRRMMMQSGRKGADIMYTGTVDCWRKIAKDEGRKAFFKG). Residue Arg235 participates in ADP binding. An important for transport activity region spans residues 235 to 240 (RRRMMM). The Nucleotide carrier signature motif signature appears at 235–240 (RRRMMM). An N6-succinyllysine mark is found at Lys245 and Lys272. The chain crosses the membrane as a helical span at residues 274–291 (AWSNVLRGMGGAFVLVLY). Over 292-298 (DEIKKYV) the chain is Mitochondrial intermembrane.

It belongs to the mitochondrial carrier (TC 2.A.29) family. In terms of assembly, monomer. Found in a complex with ARL2, ARL2BP and SLC25A4/ANT1. Interacts with ARL2BP. Interacts with TIMM44; leading to inhibit the presequence translocase TIMM23, thereby promoting stabilization of PINK1. In terms of processing, under cell death induction, transglutaminated by TGM2. Transglutamination leads to formation of covalent cross-links between a glutamine and the epsilon-amino group of a lysine residue, forming polymers.

The protein localises to the mitochondrion inner membrane. It is found in the membrane. It catalyses the reaction ADP(in) + ATP(out) = ADP(out) + ATP(in). The enzyme catalyses H(+)(in) = H(+)(out). The matrix-open state (m-state) is inhibited by the membrane-permeable bongkrekic acid (BKA). The cytoplasmic-open state (c-state) is inhibited by the membrane-impermeable toxic inhibitor carboxyatractyloside (CATR). Proton transporter activity is inhibited by ADP:ATP antiporter activity. Functionally, ADP:ATP antiporter that mediates import of ADP into the mitochondrial matrix for ATP synthesis, and export of ATP out to fuel the cell. Cycles between the cytoplasmic-open state (c-state) and the matrix-open state (m-state): operates by the alternating access mechanism with a single substrate-binding site intermittently exposed to either the cytosolic (c-state) or matrix (m-state) side of the inner mitochondrial membrane. In addition to its ADP:ATP antiporter activity, also involved in mitochondrial uncoupling and mitochondrial permeability transition pore (mPTP) activity. Plays a role in mitochondrial uncoupling by acting as a proton transporter: proton transport uncouples the proton flows via the electron transport chain and ATP synthase to reduce the efficiency of ATP production and cause mitochondrial thermogenesis. Proton transporter activity is inhibited by ADP:ATP antiporter activity, suggesting that SLC25A4/ANT1 acts as a master regulator of mitochondrial energy output by maintaining a delicate balance between ATP production (ADP:ATP antiporter activity) and thermogenesis (proton transporter activity). Proton transporter activity requires free fatty acids as cofactor, but does not transport it. Also plays a key role in mPTP opening, a non-specific pore that enables free passage of the mitochondrial membranes to solutes of up to 1.5 kDa, and which contributes to cell death. It is however unclear if SLC25A4/ANT1 constitutes a pore-forming component of mPTP or regulates it. Acts as a regulator of mitophagy independently of ADP:ATP antiporter activity: promotes mitophagy via interaction with TIMM44, leading to inhibit the presequence translocase TIMM23, thereby promoting stabilization of PINK1. The protein is ADP/ATP translocase 1 of Rattus norvegicus (Rat).